Here is a 503-residue protein sequence, read N- to C-terminus: Probable cytosol aminopeptidase (503 aa).

Positions 270 and 275 each coordinate Mn(2+). Lys282 is a catalytic residue. Positions 293, 352, and 354 each coordinate Mn(2+). The active site involves Arg356.

The protein belongs to the peptidase M17 family. Mn(2+) is required as a cofactor.

The protein localises to the cytoplasm. It carries out the reaction Release of an N-terminal amino acid, Xaa-|-Yaa-, in which Xaa is preferably Leu, but may be other amino acids including Pro although not Arg or Lys, and Yaa may be Pro. Amino acid amides and methyl esters are also readily hydrolyzed, but rates on arylamides are exceedingly low.. The enzyme catalyses Release of an N-terminal amino acid, preferentially leucine, but not glutamic or aspartic acids.. Presumably involved in the processing and regular turnover of intracellular proteins. Catalyzes the removal of unsubstituted N-terminal amino acids from various peptides. In Edwardsiella ictaluri (strain 93-146), this protein is Probable cytosol aminopeptidase.